The sequence spans 214 residues: uncharacterized protein (214 aa).

2 consecutive transmembrane segments (helical) span residues 23–43 (ILVGACAAVWLVFTGVSVAAA) and 65–85 (VLYAVIVVSALVIVGAIPVLL). The interval 96–115 (ATRPTGASVRGGRSIGSGHP) is disordered. 2 helical membrane passes run 152 to 172 (VVLTSAIGIALIAVAAATYLM) and 181 to 201 (WISYGLAGVVTAGMPVIEWLY).

The protein resides in the cell membrane. This is an uncharacterized protein from Mycobacterium tuberculosis (strain CDC 1551 / Oshkosh).